Consider the following 269-residue polypeptide: uncharacterized protein (269 aa).

The HTH gntR-type domain occupies alanine 5–lysine 73. The segment at residues isoleucine 33 to lysine 52 is a DNA-binding region (H-T-H motif).

In terms of biological role, the imp locus inhibits the extrachromosomal maintenance of the Streptomyces plasmid SLP1. This is an uncharacterized protein from Streptomyces coelicolor (strain ATCC BAA-471 / A3(2) / M145).